The primary structure comprises 354 residues: Peptide chain release factor 1 (354 aa).

The residue at position 232 (Gln232) is an N5-methylglutamine.

The protein belongs to the prokaryotic/mitochondrial release factor family. Post-translationally, methylated by PrmC. Methylation increases the termination efficiency of RF1.

It localises to the cytoplasm. Peptide chain release factor 1 directs the termination of translation in response to the peptide chain termination codons UAG and UAA. The polypeptide is Peptide chain release factor 1 (Phytoplasma australiense).